The following is a 138-amino-acid chain: Transcription antitermination protein NusB (138 aa).

The protein belongs to the NusB family.

In terms of biological role, involved in transcription antitermination. Required for transcription of ribosomal RNA (rRNA) genes. Binds specifically to the boxA antiterminator sequence of the ribosomal RNA (rrn) operons. The sequence is that of Transcription antitermination protein NusB from Coxiella burnetii (strain Dugway 5J108-111).